Reading from the N-terminus, the 752-residue chain is Protein ORF24 (752 aa).

This sequence belongs to the herpesviridae UL87 family. As to quaternary structure, interacts with ORF34.

In terms of biological role, plays a role in the expression of late viral mRNAs together with ORF34. This is Protein ORF24 (ORF24) from Homo sapiens (Human).